Reading from the N-terminus, the 263-residue chain is UPF0739 protein C1orf74 homolog (263 aa).

This sequence belongs to the UPF0739 family.

This Mus musculus (Mouse) protein is UPF0739 protein C1orf74 homolog.